We begin with the raw amino-acid sequence, 157 residues long: Large ribosomal subunit protein uL10 (157 aa).

Belongs to the universal ribosomal protein uL10 family. As to quaternary structure, part of the ribosomal stalk of the 50S ribosomal subunit. The N-terminus interacts with L11 and the large rRNA to form the base of the stalk. The C-terminus forms an elongated spine to which L12 dimers bind in a sequential fashion forming a multimeric L10(L12)X complex.

Its function is as follows. Forms part of the ribosomal stalk, playing a central role in the interaction of the ribosome with GTP-bound translation factors. This is Large ribosomal subunit protein uL10 from Campylobacter hominis (strain ATCC BAA-381 / DSM 21671 / CCUG 45161 / LMG 19568 / NCTC 13146 / CH001A).